Reading from the N-terminus, the 62-residue chain is Sperm protamine P1 (62 aa).

The disordered stretch occupies residues 1 to 62; sequence MARYRRRSRS…RYSRRGRRRY (62 aa).

The protein belongs to the protamine P1 family. In terms of tissue distribution, testis.

It is found in the nucleus. The protein resides in the chromosome. In terms of biological role, protamines substitute for histones in the chromatin of sperm during the haploid phase of spermatogenesis. They compact sperm DNA into a highly condensed, stable and inactive complex. This is Sperm protamine P1 (PRM1) from Sarcophilus harrisii (Tasmanian devil).